The chain runs to 457 residues: Guanine nucleotide-binding protein subunit alpha homolog (457 aa).

One can recognise a G-alpha domain in the interval 131–457 (RQVKLLLLGA…QRNLNALMLQ (327 aa)). The segment at 134-147 (KLLLLGAGESGKST) is G1 motif. Residues 139 to 146 (GAGESGKS), 274 to 280 (LHCRKAT), 299 to 303 (DVGGQ), 369 to 372 (NKTD), and alanine 429 each bind GTP. The Mg(2+) site is built by serine 146 and threonine 280. Positions 272-280 (DILHCRKAT) are G2 motif. A G3 motif region spans residues 295–304 (FVFVDVGGQR). The interval 365 to 372 (ILFLNKTD) is G4 motif. The tract at residues 427-432 (TTAIDT) is G5 motif.

This sequence belongs to the G-alpha family. G(12) subfamily. In terms of assembly, g proteins are composed of 3 units; alpha, beta and gamma. The alpha chain contains the guanine nucleotide binding site. As to expression, in ovary, expressed in nurse cells and oocyte. In early embryos, distributed uniformly. At the extended germband stage, accumulates in the mesoderm.

It localises to the cytoplasm. Functionally, may play a role in a signal transduction pathway used during gastrulation. Required specifically for the ventral furrow and posterior midgut invaginations, where it is necessary for coordinating cell shape changes. In terms of biological role, guanine nucleotide-binding proteins (G proteins) are involved as modulators or transducers in various transmembrane signaling systems. The polypeptide is Guanine nucleotide-binding protein subunit alpha homolog (cta) (Drosophila melanogaster (Fruit fly)).